Here is a 716-residue protein sequence, read N- to C-terminus: Protein C-mannosyl-transferase DPY19L3 (716 aa).

At 1–43 (MMSIRQRREIRATEVSEDFPAQEENVKLENKLPSGCTSRRLWK) the chain is on the cytoplasmic side. A helical membrane pass occupies residues 44-64 (ILSLTIGGTIALCIGLLTSVY). The Lumenal segment spans residues 65 to 154 (LATLHENDLW…RVLPIQKYLE (90 aa)). N-linked (GlcNAc...) asparagine glycosylation occurs at N118. The chain crosses the membrane as a helical span at residues 155-182 (PVYFYIYTLFGLQAIYVTALYITSWLLS). The Cytoplasmic portion of the chain corresponds to 183–184 (GT). Residues 185-197 (WLSGLLAAFWYVT) constitute an intramembrane region (name=3). At 198 to 215 (NRIDTTRVEFTIPLRENW) the chain is on the cytoplasmic side. Residues 216-230 (ALPFFAIQIAAITYF) constitute an intramembrane region (name=4). Residues 231–239 (LRPNLQPLS) are Cytoplasmic-facing. A helical transmembrane segment spans residues 240–256 (ERLTLLAIFISTFLFSL). The Lumenal portion of the chain corresponds to 257 to 262 (TWQFNQ). A helical membrane pass occupies residues 263–279 (FMMLMQALVLFTLDSLD). Topologically, residues 280 to 289 (MLPAVKATWL) are cytoplasmic. A helical membrane pass occupies residues 290 to 306 (YGIQITSLLLVCILQFF). At 307-308 (NS) the chain is on the lumenal side. The chain crosses the membrane as a helical span at residues 309-323 (MILGSLLISFNLSVF). Topologically, residues 324-338 (IARKLQKNLKTGSFL) are cytoplasmic. A helical membrane pass occupies residues 339–359 (NRLGKLLLHLFMVLCLTLFLN). At 360-414 (NIIKKILNLKSDEHIFKFLKAKFGLGATRDFDANLYLCEEAFGLLPFNTFGRLSD) the chain is on the lumenal side. The chain crosses the membrane as a helical span at residues 415–437 (TLLFYAYIFVLSITVIVAFVVAF). Over 438-465 (HNLSDSTNQQSVGKMEKGTVDLKPETAY) the chain is Cytoplasmic. The helical transmembrane segment at 466–485 (NLIHTILFGFLALSTMRMKY) threads the bilayer. At 486–487 (LW) the chain is on the lumenal side. Residues 488-499 (TSHMCVFASFGL) traverse the membrane as a helical segment. Topologically, residues 500-522 (CSPEIWELLLKSVHLYNPKRICI) are cytoplasmic. A helical membrane pass occupies residues 523–539 (MRYSVPILILLYLCYKF). Residues 540–716 (WPGMMDELSE…FHVYKLSRNK (177 aa)) are Lumenal-facing. N-linked (GlcNAc...) asparagine glycosylation is present at N704.

Belongs to the dpy-19 family. In terms of tissue distribution, widely expressed.

The protein resides in the endoplasmic reticulum membrane. It carries out the reaction L-tryptophyl-[protein] + a di-trans,poly-cis-dolichyl beta-D-mannosyl phosphate = C-alpha-D-mannosyl-L-tryptophyl-[protein] + a di-trans,poly-cis-dolichyl phosphate + H(+). It participates in protein modification; protein glycosylation. Its function is as follows. C-mannosyltransferase that mediates C-mannosylation of tryptophan residues on target proteins. The reaction occurs on the luminal side of the endoplasmic reticulum and involves the transfer of a mannose unit from a dolichylphosphate mannose (Dol-P-Man) donor to an acceptor protein containing a WxxW or WxxC consensus sequence. C-mannosylates RSPO1, a Wnt signaling regulator, preferentially at the first Trp residue in the sequence WxxW. C-mannosylates the netrin receptor UNC5A, preferentially at the third tryptophan of WxxWxxWxxC sequence. In terms of biological role, has no C-mannosyltransferase activity. In Homo sapiens (Human), this protein is Protein C-mannosyl-transferase DPY19L3 (DPY19L3).